Consider the following 198-residue polypeptide: Glycerol-3-phosphate acyltransferase (198 aa).

The next 5 helical transmembrane spans lie at 2 to 22 (YAVLTAIIAYLIGCINNAYIF), 48 to 70 (LGYKAAAPVFALDVLKGVIAVLI), 75 to 97 (MGNTGAMIAGIAVVCGHNWPVFL), 111 to 131 (VVMTVSPLLGLIALAIGVTVI), and 154 to 174 (IFWNSTQIFIFSLILASLAIF).

Belongs to the PlsY family. Probably interacts with PlsX.

The protein resides in the cell membrane. The catalysed reaction is an acyl phosphate + sn-glycerol 3-phosphate = a 1-acyl-sn-glycero-3-phosphate + phosphate. It functions in the pathway lipid metabolism; phospholipid metabolism. Functionally, catalyzes the transfer of an acyl group from acyl-phosphate (acyl-PO(4)) to glycerol-3-phosphate (G3P) to form lysophosphatidic acid (LPA). This enzyme utilizes acyl-phosphate as fatty acyl donor, but not acyl-CoA or acyl-ACP. The chain is Glycerol-3-phosphate acyltransferase from Thermoanaerobacter sp. (strain X514).